A 341-amino-acid chain; its full sequence is Glycerol-3-phosphate dehydrogenase [NAD(P)+] (341 aa).

Residues Ser14, Phe15, Arg35, and Lys108 each coordinate NADPH. Sn-glycerol 3-phosphate is bound by residues Lys108 and Gly136. Residue Ala140 participates in NADPH binding. Sn-glycerol 3-phosphate contacts are provided by Lys191, Asp244, Ser254, Arg255, and Asn256. Lys191 functions as the Proton acceptor in the catalytic mechanism. Arg255 provides a ligand contact to NADPH. Positions 279 and 281 each coordinate NADPH.

The protein belongs to the NAD-dependent glycerol-3-phosphate dehydrogenase family.

Its subcellular location is the cytoplasm. It catalyses the reaction sn-glycerol 3-phosphate + NAD(+) = dihydroxyacetone phosphate + NADH + H(+). It carries out the reaction sn-glycerol 3-phosphate + NADP(+) = dihydroxyacetone phosphate + NADPH + H(+). It participates in membrane lipid metabolism; glycerophospholipid metabolism. Catalyzes the reduction of the glycolytic intermediate dihydroxyacetone phosphate (DHAP) to sn-glycerol 3-phosphate (G3P), the key precursor for phospholipid synthesis. The sequence is that of Glycerol-3-phosphate dehydrogenase [NAD(P)+] from Pseudomonas syringae pv. tomato (strain ATCC BAA-871 / DC3000).